Reading from the N-terminus, the 312-residue chain is Glyoxylate/hydroxypyruvate reductase A (312 aa).

R227 is an active-site residue. H275 (proton donor) is an active-site residue.

The protein belongs to the D-isomer specific 2-hydroxyacid dehydrogenase family. GhrA subfamily.

The protein resides in the cytoplasm. The catalysed reaction is glycolate + NADP(+) = glyoxylate + NADPH + H(+). It catalyses the reaction (R)-glycerate + NAD(+) = 3-hydroxypyruvate + NADH + H(+). It carries out the reaction (R)-glycerate + NADP(+) = 3-hydroxypyruvate + NADPH + H(+). In terms of biological role, catalyzes the NADPH-dependent reduction of glyoxylate and hydroxypyruvate into glycolate and glycerate, respectively. In Salmonella choleraesuis (strain SC-B67), this protein is Glyoxylate/hydroxypyruvate reductase A.